A 391-amino-acid chain; its full sequence is Carbamoyl phosphate synthase small chain (391 aa).

Residues 1 to 189 (MIKSALLVLE…DLPAAKQPED (189 aa)) are CPSase. L-glutamine is bound by residues S47, G241, and G243. The 188-residue stretch at 193 to 380 (HVVAYDYGVK…IELIEAYRAS (188 aa)) folds into the Glutamine amidotransferase type-1 domain. Residue C269 is the Nucleophile of the active site. Positions 270, 273, 311, 313, and 314 each coordinate L-glutamine. Active-site residues include H353 and E355.

It belongs to the CarA family. In terms of assembly, composed of two chains; the small (or glutamine) chain promotes the hydrolysis of glutamine to ammonia, which is used by the large (or ammonia) chain to synthesize carbamoyl phosphate. Tetramer of heterodimers (alpha,beta)4.

The enzyme catalyses hydrogencarbonate + L-glutamine + 2 ATP + H2O = carbamoyl phosphate + L-glutamate + 2 ADP + phosphate + 2 H(+). The catalysed reaction is L-glutamine + H2O = L-glutamate + NH4(+). It functions in the pathway amino-acid biosynthesis; L-arginine biosynthesis; carbamoyl phosphate from bicarbonate: step 1/1. The protein operates within pyrimidine metabolism; UMP biosynthesis via de novo pathway; (S)-dihydroorotate from bicarbonate: step 1/3. Functionally, small subunit of the glutamine-dependent carbamoyl phosphate synthetase (CPSase). CPSase catalyzes the formation of carbamoyl phosphate from the ammonia moiety of glutamine, carbonate, and phosphate donated by ATP, constituting the first step of 2 biosynthetic pathways, one leading to arginine and/or urea and the other to pyrimidine nucleotides. The small subunit (glutamine amidotransferase) binds and cleaves glutamine to supply the large subunit with the substrate ammonia. The polypeptide is Carbamoyl phosphate synthase small chain (Yersinia pestis).